A 435-amino-acid chain; its full sequence is Adenylosuccinate synthetase (435 aa).

Residues 11–17 (GDEGKGK) and 39–41 (GHT) contribute to the GTP site. The active-site Proton acceptor is D12. 2 residues coordinate Mg(2+): D12 and G39. Residues 12-15 (DEGK), 37-40 (NAGH), T134, R148, N230, T245, and R309 each bind IMP. The active-site Proton donor is H40. Substrate is bound at residue 305-311 (VTTGRKR). Residues R311, 337-339 (KLD), and 419-421 (GTG) each bind GTP.

The protein belongs to the adenylosuccinate synthetase family. As to quaternary structure, homodimer. Requires Mg(2+) as cofactor.

It is found in the cytoplasm. It carries out the reaction IMP + L-aspartate + GTP = N(6)-(1,2-dicarboxyethyl)-AMP + GDP + phosphate + 2 H(+). The protein operates within purine metabolism; AMP biosynthesis via de novo pathway; AMP from IMP: step 1/2. Functionally, plays an important role in the de novo pathway and in the salvage pathway of purine nucleotide biosynthesis. Catalyzes the first committed step in the biosynthesis of AMP from IMP. The protein is Adenylosuccinate synthetase of Zygosaccharomyces rouxii (strain ATCC 2623 / CBS 732 / NBRC 1130 / NCYC 568 / NRRL Y-229).